The sequence spans 425 residues: Nuclear hormone receptor family member nhr-13 (425 aa).

Positions 5–83 form a DNA-binding region, nuclear receptor; that stretch reads PNSCEVCSSS…IGMKPLLVKS (79 aa). 2 consecutive NR C4-type zinc fingers follow at residues 11-30 and 46-71; these read CSSS…CKAC and CIDQ…LKKC. The segment at 108–148 is disordered; it reads VKENSEEIQNDDDPQESDAEMENESTPGPSSEPSENVSAEN. The span at 113–130 shows a compositional bias: acidic residues; that stretch reads EEIQNDDDPQESDAEMEN. Positions 131-142 are enriched in low complexity; the sequence is ESTPGPSSEPSE. The NR LBD domain maps to 147–414; sequence ENQETVTKFL…KSMISLTSFW (268 aa).

This sequence belongs to the nuclear hormone receptor family. As to quaternary structure, may interact with nuclear hormone receptor nhr-49.

The protein resides in the nucleus. Functionally, orphan nuclear receptor. Involved in regulating fatty acid desaturase genes, acting in concert with nuclear hormone receptor nhr-49. The polypeptide is Nuclear hormone receptor family member nhr-13 (nhr-13) (Caenorhabditis elegans).